The primary structure comprises 290 residues: Glycine--tRNA ligase alpha subunit (290 aa).

It belongs to the class-II aminoacyl-tRNA synthetase family. In terms of assembly, tetramer of two alpha and two beta subunits.

The protein resides in the cytoplasm. It carries out the reaction tRNA(Gly) + glycine + ATP = glycyl-tRNA(Gly) + AMP + diphosphate. This Brachyspira hyodysenteriae (strain ATCC 49526 / WA1) protein is Glycine--tRNA ligase alpha subunit.